The primary structure comprises 277 residues: Probable endonuclease 4 (277 aa).

9 residues coordinate Zn(2+): histidine 67, histidine 107, glutamate 141, aspartate 173, histidine 176, histidine 210, aspartate 223, histidine 225, and glutamate 255.

This sequence belongs to the AP endonuclease 2 family. The cofactor is Zn(2+).

The catalysed reaction is Endonucleolytic cleavage to 5'-phosphooligonucleotide end-products.. Its function is as follows. Endonuclease IV plays a role in DNA repair. It cleaves phosphodiester bonds at apurinic or apyrimidinic (AP) sites, generating a 3'-hydroxyl group and a 5'-terminal sugar phosphate. The protein is Probable endonuclease 4 of Haloarcula marismortui (strain ATCC 43049 / DSM 3752 / JCM 8966 / VKM B-1809) (Halobacterium marismortui).